The following is a 469-amino-acid chain: Mitochondrial-processing peptidase subunit beta (469 aa).

Histidine 78 is a binding site for Zn(2+). Glutamate 81 functions as the Proton acceptor in the catalytic mechanism. Histidine 82 and glutamate 159 together coordinate Zn(2+).

This sequence belongs to the peptidase M16 family. In terms of assembly, heterodimer of alpha and beta subunits, forming the mitochondrial processing protease (MPP) in which subunit alpha is involved in substrate recognition and binding and subunit beta is the catalytic subunit. mppB is probably also part of the cytochrome bc1 complex as a core I protein in the mitochondrial inner membrane. It depends on Zn(2+) as a cofactor.

Its subcellular location is the mitochondrion inner membrane. It is found in the mitochondrion matrix. The catalysed reaction is Release of N-terminal transit peptides from precursor proteins imported into the mitochondrion, typically with Arg in position P2.. Its activity is regulated as follows. Binding to alpha subunit is required for catalytic activity. In terms of biological role, catalytic subunit of the essential mitochondrial processing protease (MPP), which cleaves the mitochondrial sequence off newly imported precursors proteins. Preferentially, cleaves after an arginine at position P2. Plays an essential role in mitochondrial biogenesis. The protein is Mitochondrial-processing peptidase subunit beta (mppB) of Dictyostelium discoideum (Social amoeba).